We begin with the raw amino-acid sequence, 273 residues long: 2,3,4,5-tetrahydropyridine-2,6-dicarboxylate N-succinyltransferase (273 aa).

Residues Arg-104 and Asp-141 each coordinate substrate.

This sequence belongs to the transferase hexapeptide repeat family. In terms of assembly, homotrimer.

It is found in the cytoplasm. It carries out the reaction (S)-2,3,4,5-tetrahydrodipicolinate + succinyl-CoA + H2O = (S)-2-succinylamino-6-oxoheptanedioate + CoA. It functions in the pathway amino-acid biosynthesis; L-lysine biosynthesis via DAP pathway; LL-2,6-diaminopimelate from (S)-tetrahydrodipicolinate (succinylase route): step 1/3. In Neisseria meningitidis serogroup B (strain ATCC BAA-335 / MC58), this protein is 2,3,4,5-tetrahydropyridine-2,6-dicarboxylate N-succinyltransferase.